Here is a 442-residue protein sequence, read N- to C-terminus: Chromosomal replication initiator protein DnaA (442 aa).

The tract at residues Met-1–Gly-75 is domain I, interacts with DnaA modulators. Residues Gly-75 to Gly-104 are domain II. Residues Asn-105–Ala-322 are domain III, AAA+ region. Gly-150, Gly-152, Lys-153, and Thr-154 together coordinate ATP. The domain IV, binds dsDNA stretch occupies residues Asn-323–Glu-442.

Belongs to the DnaA family. As to quaternary structure, oligomerizes as a right-handed, spiral filament on DNA at oriC.

It is found in the cytoplasm. Its function is as follows. Plays an essential role in the initiation and regulation of chromosomal replication. ATP-DnaA binds to the origin of replication (oriC) to initiate formation of the DNA replication initiation complex once per cell cycle. Binds the DnaA box (a 9 base pair repeat at the origin) and separates the double-stranded (ds)DNA. Forms a right-handed helical filament on oriC DNA; dsDNA binds to the exterior of the filament while single-stranded (ss)DNA is stabiized in the filament's interior. The ATP-DnaA-oriC complex binds and stabilizes one strand of the AT-rich DNA unwinding element (DUE), permitting loading of DNA polymerase. After initiation quickly degrades to an ADP-DnaA complex that is not apt for DNA replication. Binds acidic phospholipids. The sequence is that of Chromosomal replication initiator protein DnaA from Xanthomonas euvesicatoria pv. vesicatoria (strain 85-10) (Xanthomonas campestris pv. vesicatoria).